A 486-amino-acid polypeptide reads, in one-letter code: Glycogen synthase (486 aa).

Lys-15 lines the ADP-alpha-D-glucose pocket.

Belongs to the glycosyltransferase 1 family. Bacterial/plant glycogen synthase subfamily.

It catalyses the reaction [(1-&gt;4)-alpha-D-glucosyl](n) + ADP-alpha-D-glucose = [(1-&gt;4)-alpha-D-glucosyl](n+1) + ADP + H(+). It functions in the pathway glycan biosynthesis; glycogen biosynthesis. In terms of biological role, synthesizes alpha-1,4-glucan chains using ADP-glucose. The polypeptide is Glycogen synthase (Pseudothermotoga lettingae (strain ATCC BAA-301 / DSM 14385 / NBRC 107922 / TMO) (Thermotoga lettingae)).